The chain runs to 112 residues: UPF0060 membrane protein SCO3297 (112 aa).

The next 4 helical transmembrane spans lie at A8 to V28, G33 to F53, I62 to D82, and R88 to P108.

It belongs to the UPF0060 family.

The protein localises to the cell membrane. This is UPF0060 membrane protein SCO3297 from Streptomyces coelicolor (strain ATCC BAA-471 / A3(2) / M145).